We begin with the raw amino-acid sequence, 67 residues long: Large ribosomal subunit protein bL32 (67 aa).

Positions 1–19 are enriched in basic residues; sequence MAVPKRKMSRANTRARRAQ. Residues 1–20 are disordered; the sequence is MAVPKRKMSRANTRARRAQW.

The protein belongs to the bacterial ribosomal protein bL32 family.

This Paenarthrobacter aurescens (strain TC1) protein is Large ribosomal subunit protein bL32.